The primary structure comprises 203 residues: GTP-binding protein yptV1 (203 aa).

GTP contacts are provided by residues 15–23, 33–40, 63–67, 121–124, and 151–153; these read GDSGVGKSC, YTESYIST, DTAGQ, NKSD, and SAK. The Effector region signature appears at 37–45; it reads YISTIGVDF. The segment at 173–203 is disordered; that stretch reads MASQPVPPKPGGPVVRPTEGKPINNKSSSCC. Residues Cys202 and Cys203 are each lipidated (S-geranylgeranyl cysteine).

Belongs to the small GTPase superfamily. Rab family.

Its subcellular location is the cell membrane. Functionally, protein transport. Probably involved in vesicular traffic. This is GTP-binding protein yptV1 (YPTV1) from Volvox carteri (Green alga).